We begin with the raw amino-acid sequence, 111 residues long: Probable 4-amino-4-deoxy-L-arabinose-phosphoundecaprenol flippase subunit ArnE (111 aa).

Residues 1–37 (MIWLVLILASLLSVTGQLCQKQATRPVAINKRRKHIA) lie on the Cytoplasmic side of the membrane. The chain crosses the membrane as a helical span at residues 38–58 (LWLGLGLVCLGLAMVLWLLVL). The 70-residue stretch at 40–109 (LGLGLVCLGL…IIGGIVILGS (70 aa)) folds into the EamA domain. At 59–60 (QT) the chain is on the periplasmic side. A helical membrane pass occupies residues 61–81 (VPVGIAYPMLSLNFVWVTLAA). Topologically, residues 82-87 (TKLWHE) are cytoplasmic. A helical membrane pass occupies residues 88-108 (PVSFRHWCGVAFIIGGIVILG). Over 109 to 111 (STV) the chain is Periplasmic.

The protein belongs to the ArnE family. Heterodimer of ArnE and ArnF.

It localises to the cell inner membrane. It participates in bacterial outer membrane biogenesis; lipopolysaccharide biosynthesis. In terms of biological role, translocates 4-amino-4-deoxy-L-arabinose-phosphoundecaprenol (alpha-L-Ara4N-phosphoundecaprenol) from the cytoplasmic to the periplasmic side of the inner membrane. The chain is Probable 4-amino-4-deoxy-L-arabinose-phosphoundecaprenol flippase subunit ArnE from Escherichia fergusonii (strain ATCC 35469 / DSM 13698 / CCUG 18766 / IAM 14443 / JCM 21226 / LMG 7866 / NBRC 102419 / NCTC 12128 / CDC 0568-73).